Reading from the N-terminus, the 133-residue chain is Protein NrdI (133 aa).

This sequence belongs to the NrdI family.

Its function is as follows. Probably involved in ribonucleotide reductase function. The polypeptide is Protein NrdI (Escherichia coli O17:K52:H18 (strain UMN026 / ExPEC)).